The sequence spans 131 residues: Profilin-10 (131 aa).

A disulfide bond links C13 and C115. Residues 81-97 (AVIRGKKGAGGITIKKT) carry the Involved in PIP2 interaction motif. The residue at position 111 (T111) is a Phosphothreonine.

The protein belongs to the profilin family. Occurs in many kinds of cells as a complex with monomeric actin in a 1:1 ratio. In terms of processing, phosphorylated by MAP kinases.

Its subcellular location is the cytoplasm. It localises to the cytoskeleton. Functionally, binds to actin and affects the structure of the cytoskeleton. At high concentrations, profilin prevents the polymerization of actin, whereas it enhances it at low concentrations. The sequence is that of Profilin-10 from Phleum pratense (Common timothy).